We begin with the raw amino-acid sequence, 121 residues long: Large ribosomal subunit protein bL21c (121 aa).

It belongs to the bacterial ribosomal protein bL21 family. In terms of assembly, part of the 50S ribosomal subunit.

It localises to the plastid. The protein localises to the chloroplast. Its function is as follows. This protein binds to 23S rRNA. This Huperzia lucidula (Shining clubmoss) protein is Large ribosomal subunit protein bL21c.